A 367-amino-acid chain; its full sequence is Histidinol-phosphate aminotransferase 1 (367 aa).

Lys226 bears the N6-(pyridoxal phosphate)lysine mark.

This sequence belongs to the class-II pyridoxal-phosphate-dependent aminotransferase family. Histidinol-phosphate aminotransferase subfamily. Homodimer. The cofactor is pyridoxal 5'-phosphate.

The enzyme catalyses L-histidinol phosphate + 2-oxoglutarate = 3-(imidazol-4-yl)-2-oxopropyl phosphate + L-glutamate. It participates in amino-acid biosynthesis; L-histidine biosynthesis; L-histidine from 5-phospho-alpha-D-ribose 1-diphosphate: step 7/9. The polypeptide is Histidinol-phosphate aminotransferase 1 (hisC1) (Haemophilus influenzae (strain ATCC 51907 / DSM 11121 / KW20 / Rd)).